We begin with the raw amino-acid sequence, 122 residues long: Large ribosomal subunit protein uL14 (122 aa).

Belongs to the universal ribosomal protein uL14 family. As to quaternary structure, part of the 50S ribosomal subunit. Forms a cluster with proteins L3 and L19. In the 70S ribosome, L14 and L19 interact and together make contacts with the 16S rRNA in bridges B5 and B8.

In terms of biological role, binds to 23S rRNA. Forms part of two intersubunit bridges in the 70S ribosome. This chain is Large ribosomal subunit protein uL14, found in Albidiferax ferrireducens (strain ATCC BAA-621 / DSM 15236 / T118) (Rhodoferax ferrireducens).